A 319-amino-acid chain; its full sequence is Acetyl-coenzyme A carboxylase carboxyl transferase subunit alpha (319 aa).

The CoA carboxyltransferase C-terminal domain occupies 35 to 296 (NLDEEVQRLR…KAQLLADLAD (262 aa)).

Belongs to the AccA family. Acetyl-CoA carboxylase is a heterohexamer composed of biotin carboxyl carrier protein (AccB), biotin carboxylase (AccC) and two subunits each of ACCase subunit alpha (AccA) and ACCase subunit beta (AccD).

It is found in the cytoplasm. It catalyses the reaction N(6)-carboxybiotinyl-L-lysyl-[protein] + acetyl-CoA = N(6)-biotinyl-L-lysyl-[protein] + malonyl-CoA. Its pathway is lipid metabolism; malonyl-CoA biosynthesis; malonyl-CoA from acetyl-CoA: step 1/1. Component of the acetyl coenzyme A carboxylase (ACC) complex. First, biotin carboxylase catalyzes the carboxylation of biotin on its carrier protein (BCCP) and then the CO(2) group is transferred by the carboxyltransferase to acetyl-CoA to form malonyl-CoA. This Erwinia tasmaniensis (strain DSM 17950 / CFBP 7177 / CIP 109463 / NCPPB 4357 / Et1/99) protein is Acetyl-coenzyme A carboxylase carboxyl transferase subunit alpha.